The sequence spans 214 residues: Heat shock protein 26 (214 aa).

Position 2 is an N-acetylserine (Ser2). Thr42 carries the post-translational modification Phosphothreonine. One can recognise a sHSP domain in the interval Gly86–Ser207. Residue Ser90 is modified to Phosphoserine. The residue at position 163 (Thr163) is a Phosphothreonine. Residues Lys192–Asn214 form a disordered region. Residues Pro193–Glu205 show a composition bias toward basic and acidic residues. Ser208 and Ser211 each carry phosphoserine.

This sequence belongs to the small heat shock protein (HSP20) family. Present in large complexes.

Functionally, not known. One of the major polypeptides produced on heat shock. In Saccharomyces cerevisiae (strain ATCC 204508 / S288c) (Baker's yeast), this protein is Heat shock protein 26 (HSP26).